A 432-amino-acid polypeptide reads, in one-letter code: Adenylosuccinate synthetase (432 aa).

GTP is bound by residues 13–19 (GDEGKGK) and 41–43 (GHT). Asp-14 acts as the Proton acceptor in catalysis. Residues Asp-14 and Gly-41 each coordinate Mg(2+). IMP is bound by residues 14-17 (DEGK), 39-42 (NAGH), Thr-130, Arg-144, Gln-225, Thr-240, and Arg-304. Catalysis depends on His-42, which acts as the Proton donor. Residue 300 to 306 (AVTGRPR) coordinates substrate. GTP-binding positions include Arg-306, 332-334 (KLD), and 415-417 (STG).

This sequence belongs to the adenylosuccinate synthetase family. As to quaternary structure, homodimer. The cofactor is Mg(2+).

Its subcellular location is the cytoplasm. The catalysed reaction is IMP + L-aspartate + GTP = N(6)-(1,2-dicarboxyethyl)-AMP + GDP + phosphate + 2 H(+). It participates in purine metabolism; AMP biosynthesis via de novo pathway; AMP from IMP: step 1/2. In terms of biological role, plays an important role in the de novo pathway of purine nucleotide biosynthesis. Catalyzes the first committed step in the biosynthesis of AMP from IMP. This Histophilus somni (strain 2336) (Haemophilus somnus) protein is Adenylosuccinate synthetase.